A 151-amino-acid polypeptide reads, in one-letter code: MNPQRKKRLLLIVGLLVGVGVAVGFALSALQQNINLFYTPTQIANGEAPLDTRIRAGGMVEKGSVQRSADSLDVRFVVTDFNKSVPITYRGILPDLFREGQGIVALGKLNADGVVVADEVLAKHDEKYMPPEVTKALKESGQAAAGGETKP.

Residues 1 to 8 (MNPQRKKR) are Cytoplasmic-facing. Residues 9–29 (LLLIVGLLVGVGVAVGFALSA) traverse the membrane as a helical; Signal-anchor for type II membrane protein segment. Over 30 to 151 (LQQNINLFYT…QAAAGGETKP (122 aa)) the chain is Periplasmic. The heme site is built by histidine 124 and tyrosine 128.

The protein belongs to the CcmE/CycJ family.

It localises to the cell inner membrane. Heme chaperone required for the biogenesis of c-type cytochromes. Transiently binds heme delivered by CcmC and transfers the heme to apo-cytochromes in a process facilitated by CcmF and CcmH. This is Cytochrome c-type biogenesis protein CcmE from Pseudomonas putida (strain ATCC 700007 / DSM 6899 / JCM 31910 / BCRC 17059 / LMG 24140 / F1).